A 196-amino-acid chain; its full sequence is Probable malonic semialdehyde reductase RutE (196 aa).

It belongs to the nitroreductase family. HadB/RutE subfamily. The cofactor is FMN.

The catalysed reaction is 3-hydroxypropanoate + NADP(+) = 3-oxopropanoate + NADPH + H(+). In terms of biological role, may reduce toxic product malonic semialdehyde to 3-hydroxypropionic acid, which is excreted. The polypeptide is Probable malonic semialdehyde reductase RutE (Klebsiella pneumoniae (strain 342)).